A 382-amino-acid chain; its full sequence is D-alanine--D-alanine ligase (382 aa).

The ATP-grasp domain occupies K139–A348. E168–I223 serves as a coordination point for ATP. Mg(2+)-binding residues include D300, E315, and N317.

This sequence belongs to the D-alanine--D-alanine ligase family. The cofactor is Mg(2+). Mn(2+) is required as a cofactor.

It is found in the cytoplasm. It carries out the reaction 2 D-alanine + ATP = D-alanyl-D-alanine + ADP + phosphate + H(+). It participates in cell wall biogenesis; peptidoglycan biosynthesis. Cell wall formation. The chain is D-alanine--D-alanine ligase from Methylobacterium sp. (strain 4-46).